The sequence spans 454 residues: Tubulin gamma chain (454 aa).

142-148 (AGGTGSG) contacts GTP.

It belongs to the tubulin family.

The protein resides in the cytoplasm. Its subcellular location is the cytoskeleton. It localises to the microtubule organizing center. The protein localises to the spindle pole body. In terms of biological role, tubulin is the major constituent of microtubules. The gamma chain is found at microtubule organizing centers (MTOC) such as the spindle pole or the centrosome, suggesting that it is involved in the minus-end nucleation of microtubule assembly. Interacts physically with beta-tubulin and is involved in microtubule function. This Emericella nidulans (strain FGSC A4 / ATCC 38163 / CBS 112.46 / NRRL 194 / M139) (Aspergillus nidulans) protein is Tubulin gamma chain (mipA).